Consider the following 560-residue polypeptide: Exonuclease subunit 2 (560 aa).

Residue 36 to 43 participates in ATP binding; sequence GRNGGGKS.

To phage T5 protein D13 and to yeast RAD52. Consists of two subunits: gp46 and gp47.

Functionally, exonuclease that plays a role in viral genome replication, DNA recombination, and host DNA degradation. The sequence is that of Exonuclease subunit 2 (46) from Enterobacteria phage T4 (Bacteriophage T4).